A 113-amino-acid chain; its full sequence is Crustacean hyperglycemic hormones B (113 aa).

The N-terminal stretch at 1 to 26 is a signal peptide; that stretch reads MVAFRMMSMALLVVVASSWWASPVEA. Cystine bridges form between Cys46–Cys82, Cys62–Cys78, and Cys65–Cys91. Val111 is modified (valine amide).

This sequence belongs to the arthropod CHH/MIH/GIH/VIH hormone family. As to expression, expressed at a constant level in the eyestalks of juveniles and mature females. A low level expression is seen in the central nervous system.

Its subcellular location is the secreted. Its function is as follows. Hormone found in the sinus gland of isopods and decapods which controls the blood sugar level. Has a secretagogue action over the amylase released from the midgut gland. May act as a stress hormone and may be involved in the control of molting and reproduction. This chain is Crustacean hyperglycemic hormones B, found in Metapenaeus ensis (Greasyback shrimp).